The sequence spans 405 residues: Argininosuccinate synthase (405 aa).

Residues 13–21 (AYSGGLDTS) and A40 each bind ATP. L-citrulline contacts are provided by Y91 and S96. ATP is bound at residue G121. Residues T123, N127, and D128 each coordinate L-aspartate. N127 is a binding site for L-citrulline. The L-citrulline site is built by R131, S182, S191, E267, and Y279.

Belongs to the argininosuccinate synthase family. Type 1 subfamily. Homotetramer.

Its subcellular location is the cytoplasm. The enzyme catalyses L-citrulline + L-aspartate + ATP = 2-(N(omega)-L-arginino)succinate + AMP + diphosphate + H(+). The protein operates within amino-acid biosynthesis; L-arginine biosynthesis; L-arginine from L-ornithine and carbamoyl phosphate: step 2/3. This is Argininosuccinate synthase from Rhizobium meliloti (strain 1021) (Ensifer meliloti).